Here is a 629-residue protein sequence, read N- to C-terminus: Phosphomethylpyrimidine synthase (629 aa).

Polar residues predominate over residues 1 to 13 (MTTKSKNAINLSD). The tract at residues 1–22 (MTTKSKNAINLSDSAKVDEQSV) is disordered. Substrate is bound by residues N233, M262, Y291, H327, 347 to 349 (SRG), 388 to 391 (DGLR), and E427. H431 is a binding site for Zn(2+). Substrate is bound at residue Y454. Residue H495 coordinates Zn(2+). [4Fe-4S] cluster is bound by residues C575, C578, and C583.

Belongs to the ThiC family. As to quaternary structure, homodimer. [4Fe-4S] cluster serves as cofactor.

It catalyses the reaction 5-amino-1-(5-phospho-beta-D-ribosyl)imidazole + S-adenosyl-L-methionine = 4-amino-2-methyl-5-(phosphooxymethyl)pyrimidine + CO + 5'-deoxyadenosine + formate + L-methionine + 3 H(+). The protein operates within cofactor biosynthesis; thiamine diphosphate biosynthesis. In terms of biological role, catalyzes the synthesis of the hydroxymethylpyrimidine phosphate (HMP-P) moiety of thiamine from aminoimidazole ribotide (AIR) in a radical S-adenosyl-L-methionine (SAM)-dependent reaction. The sequence is that of Phosphomethylpyrimidine synthase from Pseudomonas fluorescens (strain Pf0-1).